Here is a 229-residue protein sequence, read N- to C-terminus: Urease accessory protein UreF (229 aa).

Belongs to the UreF family. As to quaternary structure, ureD, UreF and UreG form a complex that acts as a GTP-hydrolysis-dependent molecular chaperone, activating the urease apoprotein by helping to assemble the nickel containing metallocenter of UreC. The UreE protein probably delivers the nickel.

Its subcellular location is the cytoplasm. Functionally, required for maturation of urease via the functional incorporation of the urease nickel metallocenter. In Staphylococcus aureus (strain bovine RF122 / ET3-1), this protein is Urease accessory protein UreF.